Consider the following 494-residue polypeptide: Ketol-acid reductoisomerase (NADP(+)) (494 aa).

Positions 14–208 constitute a KARI N-terminal Rossmann domain; the sequence is LDQLGRCRFM…GGHRAGCLES (195 aa). Residues 45-48, Arg-68, Arg-76, Ser-78, and 108-110 contribute to the NADP(+) site; these read CGAQ and DKQ. His-132 is an active-site residue. Gly-158 contacts NADP(+). KARI C-terminal knotted domains are found at residues 209–344 and 345–487; these read SFVA…NYPE and TDVE…MTDM. 4 residues coordinate Mg(2+): Asp-217, Glu-221, Glu-389, and Glu-393. A substrate-binding site is contributed by Ser-414.

Belongs to the ketol-acid reductoisomerase family. The cofactor is Mg(2+).

The catalysed reaction is (2R)-2,3-dihydroxy-3-methylbutanoate + NADP(+) = (2S)-2-acetolactate + NADPH + H(+). The enzyme catalyses (2R,3R)-2,3-dihydroxy-3-methylpentanoate + NADP(+) = (S)-2-ethyl-2-hydroxy-3-oxobutanoate + NADPH + H(+). The protein operates within amino-acid biosynthesis; L-isoleucine biosynthesis; L-isoleucine from 2-oxobutanoate: step 2/4. It participates in amino-acid biosynthesis; L-valine biosynthesis; L-valine from pyruvate: step 2/4. Involved in the biosynthesis of branched-chain amino acids (BCAA). Catalyzes an alkyl-migration followed by a ketol-acid reduction of (S)-2-acetolactate (S2AL) to yield (R)-2,3-dihydroxy-isovalerate. In the isomerase reaction, S2AL is rearranged via a Mg-dependent methyl migration to produce 3-hydroxy-3-methyl-2-ketobutyrate (HMKB). In the reductase reaction, this 2-ketoacid undergoes a metal-dependent reduction by NADPH to yield (R)-2,3-dihydroxy-isovalerate. The chain is Ketol-acid reductoisomerase (NADP(+)) from Vibrio parahaemolyticus serotype O3:K6 (strain RIMD 2210633).